Reading from the N-terminus, the 44-residue chain is Cuticle protein CP459 (44 aa).

2 tandem repeats follow at residues 3–20 (LLKG…KRLL) and 27–44 (VLLT…NVQF).

As to expression, calcified shell.

The sequence is that of Cuticle protein CP459 from Cancer pagurus (Rock crab).